Reading from the N-terminus, the 678-residue chain is MGDSNVDTGTTTSEMVAEEVSLFSATDMVLFSLIVGLLTYWFIFRKKKDEVPEFSKIETTTSSVKDSSFVEKMKKTGRNIIVFYGSQTGTAEEFANRLSKDAHRYGMRGMAADPEEYDLSDLSSLPEIENALAVFCMATYGEGDPTDNAQDFYDWLQEADVDLTGVKYAVFGLGNKTYEHFNAMGKYVDKRLEQLGAQRIFDLGLGDDDGNLEEDFITWREQFWPAVCEHFGVEATGEESSIRQYELVVHTDMDTAVVYTGEMGRLKSYENQKPPFDAKNPFLAVVTTNRKLNQGTERHLMHLELDISDSKIRYESGDHVAVYPANDSALVNQLGEILGTDLDIVMSLNNLDEESNKRHPFPCPTTYRTALTYYLDITNPPRTNVLYELAQYASEPSEQEQLRKMASSSGEGKELYLSWVVEARRHILAILQDYPSLRPPIDHLCERLPRLQARYYSIASSSKVHPNSVHICAVVVEYETKSGRVNKGVATSWLRAKEPAGENGRRALVPMFVRKSQFRLPFKATTPVIMVGPGTGVAPFIGFIQERAWLQEQGKEVGETLLYYGCRRSDEDYLYREELAQFHAKGALTRLSVAFSREQPQKVYVQHLLKRDKEHLWKLIHDGGAHIYICGDARNMARDVQNTFCDIVAEQGPMEHAQAVDYVKKLMTKGRYSLDVWS.

Position 2 is an N-acetylglycine (Gly-2). Over 2 to 22 (GDSNVDTGTTTSEMVAEEVSL) the chain is Lumenal. A helical membrane pass occupies residues 23-43 (FSATDMVLFSLIVGLLTYWFI). Residues 44 to 678 (FRKKKDEVPE…KGRYSLDVWS (635 aa)) are Cytoplasmic-facing. Ser-63 bears the Phosphoserine mark. A Flavodoxin-like domain is found at 80-224 (IIVFYGSQTG…DFITWREQFW (145 aa)). FMN is bound by residues 86–91 (SQTGTA), 138–141 (ATYG), 173–182 (LGNKTYEHFN), and Asp-208. Residues 279-521 (KNPFLAVVTT…FVRKSQFRLP (243 aa)) enclose the FAD-binding FR-type domain. Arg-298 provides a ligand contact to NADP(+). FAD-binding positions include Arg-424, 454–457 (RYYS), 472–474 (CAV), Tyr-478, and 488–491 (GVAT). Residues Thr-535, 596-597 (SR), 602-606 (KVYVQ), and Asp-639 each bind NADP(+). Residue Trp-677 coordinates FAD.

Belongs to the NADPH--cytochrome P450 reductase family. It in the N-terminal section; belongs to the flavodoxin family. The protein in the C-terminal section; belongs to the flavoprotein pyridine nucleotide cytochrome reductase family. It depends on FAD as a cofactor. FMN serves as cofactor.

It is found in the endoplasmic reticulum membrane. It catalyses the reaction 2 oxidized [cytochrome P450] + NADPH = 2 reduced [cytochrome P450] + NADP(+) + H(+). This enzyme is required for electron transfer from NADP to cytochrome P450 in microsomes. It can also provide electron transfer to heme oxygenase and cytochrome B5. The sequence is that of NADPH--cytochrome P450 reductase from Sus scrofa (Pig).